The sequence spans 173 residues: Lens fiber membrane intrinsic protein (173 aa).

Over 1-3 (MYS) the chain is Cytoplasmic. The chain crosses the membrane as a helical span at residues 4–24 (FMGGGLFCAWVGTILLVVATA). At 25-66 (TDHWMQYRLSGSFAHQGLWRYCLGNKCFLQTESIAYWNATRA) the chain is on the extracellular side. C-linked (Man) tryptophan glycans are attached at residues Trp-43 and Trp-61. Asn-62 is a glycosylation site (N-linked (GlcNAc...) asparagine). A helical membrane pass occupies residues 67 to 87 (FMILSALCATSGIIMGVLAFA). The Cytoplasmic segment spans residues 88–98 (QQSTFTRLSRP). A helical membrane pass occupies residues 99-119 (FSAGIMFFASTLFVLLALAIY). At 120–140 (TGVTVSFLGRRFGDWRFSWSY) the chain is on the extracellular side. The chain crosses the membrane as a helical span at residues 141-161 (ILGWVALLMTFFAGIFYMCAY). At 162–173 (RMHECRRLSTPR) the chain is on the cytoplasmic side. Ser-170 bears the Phosphoserine mark. The residue at position 171 (Thr-171) is a Phosphothreonine.

This sequence belongs to the PMP-22/EMP/MP20 family. Seems to be associated with itself or another lens membrane component via disulfide bonds. As to expression, eye lens specific.

The protein resides in the membrane. In terms of biological role, present in the thicker 16-17 nm junctions of mammalian lens fiber cells, where it may contribute to cell junctional organization. Acts as a receptor for calmodulin. May play an important role in both lens development and cataractogenesis. This Rattus norvegicus (Rat) protein is Lens fiber membrane intrinsic protein (Lim2).